The sequence spans 58 residues: UPF0391 membrane protein VP0082 (58 aa).

Transmembrane regions (helical) follow at residues 4–24 (WMFIFLALALVSAVLGFSGIA) and 30–50 (VAQVIFYLFLLSLIVSIVFVI).

It belongs to the UPF0391 family.

It is found in the cell membrane. This chain is UPF0391 membrane protein VP0082, found in Vibrio parahaemolyticus serotype O3:K6 (strain RIMD 2210633).